The primary structure comprises 377 residues: Nitric oxide reductase FlRd-NAD(+) reductase (377 aa).

It belongs to the FAD-dependent oxidoreductase family. It depends on FAD as a cofactor.

Its subcellular location is the cytoplasm. It catalyses the reaction 2 reduced [nitric oxide reductase rubredoxin domain] + NAD(+) + H(+) = 2 oxidized [nitric oxide reductase rubredoxin domain] + NADH. Its pathway is nitrogen metabolism; nitric oxide reduction. Functionally, one of at least two accessory proteins for anaerobic nitric oxide (NO) reductase. Reduces the rubredoxin moiety of NO reductase. The protein is Nitric oxide reductase FlRd-NAD(+) reductase of Escherichia coli (strain SMS-3-5 / SECEC).